A 151-amino-acid polypeptide reads, in one-letter code: Ribosomal RNA large subunit methyltransferase H (151 aa).

S-adenosyl-L-methionine is bound by residues Gly-100 and 119 to 124; that span reads LSRMTF.

The protein belongs to the RNA methyltransferase RlmH family. In terms of assembly, homodimer.

It is found in the cytoplasm. The enzyme catalyses pseudouridine(1915) in 23S rRNA + S-adenosyl-L-methionine = N(3)-methylpseudouridine(1915) in 23S rRNA + S-adenosyl-L-homocysteine + H(+). Its function is as follows. Specifically methylates the pseudouridine at position 1915 (m3Psi1915) in 23S rRNA. This is Ribosomal RNA large subunit methyltransferase H from Thermotoga neapolitana (strain ATCC 49049 / DSM 4359 / NBRC 107923 / NS-E).